Reading from the N-terminus, the 117-residue chain is Envelope glycoprotein J (117 aa).

The signal sequence occupies residues 1–26 (MRSLLFVVGAWVAAAVTHLTPNAALA). The disordered stretch occupies residues 26–64 (ATGTTPTVGANSTADPGTGANGTTVPAAGTPANSTTAAE). Polar residues predominate over residues 27-40 (TGTTPTVGANSTAD). Over 27–73 (TGTTPTVGANSTADPGTGANGTTVPAAGTPANSTTAAETPAPFPPVD) the chain is Extracellular. 3 N-linked (GlcNAc...) asparagine; by host glycosylation sites follow: asparagine 36, asparagine 46, and asparagine 58. A helical membrane pass occupies residues 74 to 94 (FALPVVIGGLCALTLAAMGAG). Residues 95–117 (ALLHRCCRRAAARRRQRAAYVYA) lie on the Cytoplasmic side of the membrane.

This sequence belongs to the alphaherpesvirinae glycoprotein J family.

It localises to the host Golgi apparatus membrane. The protein resides in the host endoplasmic reticulum membrane. Its subcellular location is the host endosome membrane. Functionally, inhibits host cell apoptosis. Induces an increase in reactive oxygen species (ROS) in the host cell. The sequence is that of Envelope glycoprotein J (gJ) from Homo sapiens (Human).